Here is a 276-residue protein sequence, read N- to C-terminus: 4-deoxy-L-threo-5-hexosulose-uronate ketol-isomerase (276 aa).

H194, H196, E201, and H243 together coordinate Zn(2+).

This sequence belongs to the KduI family. Requires Zn(2+) as cofactor.

It catalyses the reaction 5-dehydro-4-deoxy-D-glucuronate = 3-deoxy-D-glycero-2,5-hexodiulosonate. The protein operates within glycan metabolism; pectin degradation; 2-dehydro-3-deoxy-D-gluconate from pectin: step 4/5. Its function is as follows. Catalyzes the isomerization of 5-dehydro-4-deoxy-D-glucuronate to 3-deoxy-D-glycero-2,5-hexodiulosonate. This is 4-deoxy-L-threo-5-hexosulose-uronate ketol-isomerase from Lachnoclostridium phytofermentans (strain ATCC 700394 / DSM 18823 / ISDg) (Clostridium phytofermentans).